Reading from the N-terminus, the 81-residue chain is MSRKCMLTGKKANNAYSVSFSHRRNKRLQMANLQWKRIWDDQQGCFVRLKLSTKAIKTLEHRSLHALAKEAGLDLSKYVVK.

The protein belongs to the bacterial ribosomal protein bL28 family.

The sequence is that of Large ribosomal subunit protein bL28 from Gloeobacter violaceus (strain ATCC 29082 / PCC 7421).